A 178-amino-acid polypeptide reads, in one-letter code: Interleukin-1 receptor antagonist protein (178 aa).

An N-terminal signal peptide occupies residues 1 to 26 (MEICRGPYSHLISLLLILLFRSESAG). Residues Cys92 and Cys142 are joined by a disulfide bond. The N-linked (GlcNAc...) asparagine glycan is linked to Asn110.

Belongs to the IL-1 family.

The protein resides in the secreted. Its function is as follows. Anti-inflammatory antagonist of interleukin-1 family of proinflammatory cytokines such as interleukin-1beta/IL1B and interleukin-1alpha/IL1A. Protects from immune dysregulation and uncontrolled systemic inflammation triggered by IL1 for a range of innate stimulatory agents such as pathogens. The protein is Interleukin-1 receptor antagonist protein (Il1rn) of Rattus norvegicus (Rat).